The primary structure comprises 673 residues: UvrABC system protein B (673 aa).

In terms of domain architecture, Helicase ATP-binding spans 29–188 (EGLNDGLAHQ…LAELQYTRND (160 aa)). Residue 42–49 (GVTGSGKT) participates in ATP binding. Positions 95–118 (YYDYYQPEAYVPSSDTFIEKDASI) match the Beta-hairpin motif. The Helicase C-terminal domain occupies 434 to 600 (QVDDVLSEIH…ALNKKVGELL (167 aa)). A disordered region spans residues 607 to 632 (KPKRGKQAVKVEEKSANTYKPKSRKE). One can recognise a UVR domain in the interval 634–669 (EKELKQLEQQMRDFAKDLEFEKAAAVRDKIGQLKAV).

This sequence belongs to the UvrB family. In terms of assembly, forms a heterotetramer with UvrA during the search for lesions. Interacts with UvrC in an incision complex.

The protein localises to the cytoplasm. Functionally, the UvrABC repair system catalyzes the recognition and processing of DNA lesions. A damage recognition complex composed of 2 UvrA and 2 UvrB subunits scans DNA for abnormalities. Upon binding of the UvrA(2)B(2) complex to a putative damaged site, the DNA wraps around one UvrB monomer. DNA wrap is dependent on ATP binding by UvrB and probably causes local melting of the DNA helix, facilitating insertion of UvrB beta-hairpin between the DNA strands. Then UvrB probes one DNA strand for the presence of a lesion. If a lesion is found the UvrA subunits dissociate and the UvrB-DNA preincision complex is formed. This complex is subsequently bound by UvrC and the second UvrB is released. If no lesion is found, the DNA wraps around the other UvrB subunit that will check the other stand for damage. This chain is UvrABC system protein B, found in Actinobacillus pleuropneumoniae serotype 5b (strain L20).